We begin with the raw amino-acid sequence, 608 residues long: Albumin (608 aa).

The first 18 residues, 1-18 (MKWVTFLLLLFISGSAFS), serve as a signal peptide directing secretion. The propeptide occupies 19–24 (RGVFRR). Albumin domains lie at 19–211 (RGVF…AVKE), 212–403 (KALV…EFQP), and 404–601 (LVEE…NLVA). His-27 lines the Cu cation pocket. The residue at position 29 (Ser-29) is a Phosphoserine. Ca(2+) is bound by residues Glu-30 and Asp-37. A disulfide bond links Cys-77 and Cys-86. Ser-89 is subject to Phosphoserine. His-91 is a Zn(2+) binding site. Disulfide bonds link Cys-99-Cys-115, Cys-114-Cys-125, Cys-148-Cys-193, Cys-192-Cys-201, Cys-224-Cys-270, and Cys-269-Cys-277. Glu-268 provides a ligand contact to Ca(2+). The Zn(2+) site is built by His-271 and Asp-273. Ca(2+) is bound by residues Asp-273, Glu-276, and Asp-279. 8 disulfide bridges follow: Cys-289-Cys-303, Cys-302-Cys-313, Cys-340-Cys-385, Cys-384-Cys-393, Cys-416-Cys-462, Cys-461-Cys-472, Cys-485-Cys-501, and Cys-500-Cys-511. Phosphoserine is present on Ser-297. A Phosphoserine modification is found at Ser-443. Residues Thr-444 and Thr-446 each carry the phosphothreonine modification. The residue at position 460 (Lys-460) is an N6-succinyllysine. Ser-513 is subject to Phosphoserine. 2 disulfide bridges follow: Cys-538–Cys-583 and Cys-582–Cys-591. An N6-succinyllysine modification is found at Lys-543. N6-methyllysine is present on Lys-558. Residue Thr-570 is modified to Phosphothreonine. Residue Lys-588 is modified to N6-succinyllysine.

Belongs to the ALB/AFP/VDB family. As to quaternary structure, interacts with FCGRT; this interaction regulates ALB homeostasis. Interacts with TASOR. In plasma, occurs in a covalently-linked complex with chromophore-bound alpha-1-microglobulin; this interaction does not prevent fatty acid binding to ALB. In terms of processing, phosphorylated by FAM20C in the extracellular medium. Plasma.

Its subcellular location is the secreted. Binds water, Ca(2+), Na(+), K(+), fatty acids, hormones, bilirubin and drugs. Its main function is the regulation of the colloidal osmotic pressure of blood. Major zinc transporter in plasma, typically binds about 80% of all plasma zinc. Major calcium and magnesium transporter in plasma, binds approximately 45% of circulating calcium and magnesium in plasma. Potentially has more than two calcium-binding sites and might additionally bind calcium in a non-specific manner. The shared binding site between zinc and calcium at residue Asp-273 suggests a crosstalk between zinc and calcium transport in the blood. The rank order of affinity is zinc &gt; calcium &gt; magnesium. Binds to the bacterial siderophore enterobactin and inhibits enterobactin-mediated iron uptake of E.coli from ferric transferrin, and may thereby limit the utilization of iron and growth of enteric bacteria such as E.coli. Does not prevent iron uptake by the bacterial siderophore aerobactin. The protein is Albumin (Alb) of Rattus norvegicus (Rat).